We begin with the raw amino-acid sequence, 510 residues long: MVSSLNNLGVLLPIEGVIILVFVLSCFSLAIKRLYFSPLAKFPGPKLAALTMWYEFYYDVVKRGNYFRQIAKMHDQYGPVVRINPFELHVNDPTFYPILYSSSTKKRDKWSWAAGMFGNNTSVFSTVPHDHHRIRRAALNPLFSRTAIKQLEPTIKCQMHELSRRLDSFCESGMVLDLGLAFTVFAADVISAYCFGEPFGLLQDPDFAPEWVETVAAPSELGHLIKQFPWALGLFRLLPRSLIGVISPAIVRLYTIQEWMSLNVQSLISKRHDDHSSSAKSCVFEALLRSKLPASEKTVDRLKGEGQTLIGAGTLTTANVLKHVVFHTLDNPDRLHALAAELEAEFPDPNEDVSLDRLERLPLLTAYIKEALRLGYGVTHRLQLLADEPLHCNGMIIPPRTPVGMTSIFMHDDPTVFPNPREFDPDRWLGEVEDRRHLERCFVPFSKGTRMCLGMHLAWAEIYIVIATVFRSYSFQLHDTDRSHIEMAHDFFDPAPKLDSKGLRVTVQRK.

Residues 11 to 31 traverse the membrane as a helical segment; the sequence is LLPIEGVIILVFVLSCFSLAI. C452 serves as a coordination point for heme.

This sequence belongs to the cytochrome P450 family. Requires heme as cofactor.

The protein localises to the membrane. The protein operates within secondary metabolite biosynthesis. Tryptophan 6-hydroxylase; part of the fragmented gene cluster that mediates the biosynthesis of fusarochromene, a tryptophan-derived metabolite closely related to a group of mycotoxins including fusarochromanone. Within the pathway, fscE hydroxalates the first intermediate D-tryptophan to yield 6-hydroxytryptophan. The first step of the pathway is the epimerization of L-tryptophan to D-tryptophan in the presence of the NRPS-like tryptophan epimerase fscC. D-tryptophan is subsequently hydroxylated by the tryptophan 6-hydroxylase fscE to yield 6-hydroxytryptophan. The pyrrole ring undergoes cleavaged by the tryptophan 2,3-dioxygenase fscD and is finally converted to 4-hydroxykyrunenine by the hydrolase fscH. The NRPS-like oxidoreductase fscA reduces the carboxyl group to primary alcohol and the DMATS-type prenyltransferase fscG performs prenylation, followed by the formation of a chromene ring catalyzed by the oxidoreductase fscI, which leads to desacetylfusarochromene. Epoxidation by fscF and rearrangement reactions of chromene double bonds convert compound desacetylfusarochromene to fusarochromanones. Although specific acetyltransferases were not found near the fsc gene cluster, several predicted enzymes containing the N-acetyltransferase superfamily domain are present in the genome of F.equiseti. These predicted enzymes may have the potential to convert desacetylfusarochromene to fusarochromene. In Fusarium equiseti (Fusarium scirpi), this protein is Tryptophan 6-hydroxylase fscE.